The chain runs to 474 residues: Coronin-1C (474 aa).

WD repeat units follow at residues 25–70 (DDIR…GRID), 78–118 (GHTG…LTLS), 128–168 (GHSK…ALIN), 172–202 (MHSDMIYNVSWNRNGSLICTASKDKKVRVID), 215–249 (AHEGARPMRAIFLADGNVFTTGFSRMSERQLALWN), and 263–303 (DTSN…PYVH). The stretch at 436-474 (QNEAKLDEILKEIKSIKDTICNQDERISKLEQQMAKIAA) forms a coiled coil. Lys-446 is modified (N6-acetyllysine).

Belongs to the WD repeat coronin family. In terms of assembly, binds F-actin. Interacts with RCC2. Interacts preferentially with nucleotide-free and GDP-bound RAC1. Interacts with VIM (via head domain). Isoform 1 and isoform 2 appear as homotrimers, while isoform 3 seems to exist as monomers. Interacts with MICAL2; this interaction recruits MICAL2 to the actin filaments. In terms of tissue distribution, ubiquitous.

It localises to the cell membrane. It is found in the cell projection. Its subcellular location is the lamellipodium. The protein localises to the ruffle membrane. The protein resides in the cytoplasm. It localises to the cytoskeleton. It is found in the cell cortex. Its subcellular location is the endosome membrane. The protein localises to the sarcolemma. The protein resides in the myofibril. It localises to the sarcomere. It is found in the synapse. Its function is as follows. Plays a role in directed cell migration by regulating the activation and subcellular location of RAC1. Increases the presence of activated RAC1 at the leading edge of migrating cells. Required for normal organization of the cytoskeleton, including the actin cytoskeleton, microtubules and the vimentin intermediate filaments. Plays a role in endoplasmic reticulum-associated endosome fission: localizes to endosome membrane tubules and promotes recruitment of TMCC1, leading to recruitment of the endoplasmic reticulum to endosome tubules for fission. Endosome membrane fission of early and late endosomes is essential to separate regions destined for lysosomal degradation from carriers to be recycled to the plasma membrane. Required for normal cell proliferation, cell migration, and normal formation of lamellipodia. Required for normal distribution of mitochondria within cells. In terms of biological role, involved in myogenic differentiation. In Homo sapiens (Human), this protein is Coronin-1C.